The chain runs to 303 residues: Diacylglycerol kinase (303 aa).

Positions 1–132 (MKRARIIYNP…IDIGQVNGQY (132 aa)) constitute a DAGKc domain. Residues 9 to 13 (NPTSG), threonine 40, 66 to 72 (GDGTINE), and threonine 93 contribute to the ATP site. Mg(2+)-binding residues include serine 213, aspartate 216, and methionine 218. Glutamate 273 (proton acceptor) is an active-site residue.

The protein belongs to the diacylglycerol/lipid kinase family. Requires Mg(2+) as cofactor.

It catalyses the reaction a 1,2-diacyl-sn-glycerol + ATP = a 1,2-diacyl-sn-glycero-3-phosphate + ADP + H(+). It carries out the reaction 1,2-di-(9Z-octadecenoyl)-sn-glycerol + ATP = 1,2-di-(9Z-octadecenoyl)-sn-glycero-3-phosphate + ADP + H(+). Functionally, catalyzes the phosphorylation of diacylglycerol (DAG) into phosphatidic acid. Is a key enzyme involved in the production of lipoteichoic acid by reintroducing DAG formed from the breakdown of membrane phospholipids into the phosphatidylglycerol biosynthetic pathway. Is more active toward long-chain DAG compared with short-chain DAG. Is not able to phosphorylate substrates other than DAG, such as monoacylglycerol, ceramide, undecaprenol, phosphatidylinositol, or sphingosine. This is Diacylglycerol kinase (dagK) from Bacillus subtilis (strain 168).